Here is a 138-residue protein sequence, read N- to C-terminus: uncharacterized protein (138 aa).

The chain crosses the membrane as a helical span at residues 11–33; it reads ILLGLTLSLTFLYPLIITLIILY.

It localises to the membrane. This is an uncharacterized protein from Aquifex aeolicus (strain VF5).